A 256-amino-acid polypeptide reads, in one-letter code: Fructose-1,6-bisphosphatase/inositol-1-monophosphatase (256 aa).

Mg(2+) is bound by residues glutamate 65, aspartate 79, isoleucine 81, and aspartate 82. Residues 82–84, arginine 172, alanine 177, and arginine 196 contribute to the substrate site; that span reads DGT. A Mg(2+)-binding site is contributed by aspartate 201.

The protein belongs to the inositol monophosphatase superfamily. FBPase class 4 family. Homotetramer. Mg(2+) serves as cofactor.

It carries out the reaction beta-D-fructose 1,6-bisphosphate + H2O = beta-D-fructose 6-phosphate + phosphate. The catalysed reaction is a myo-inositol phosphate + H2O = myo-inositol + phosphate. With respect to regulation, in contrast to mammalian I-1-P phosphatases, is only weakly inhibited by Li(+), since 50% inhibitory concentration for Li(+) is about 100 mM, and the Li(+) concentration required to totally abolish I-1-Pase activity is 1 M. Phosphatase with broad specificity; it can dephosphorylate fructose 1,6-bisphosphate, both D and L isomers of inositol-1-phosphate (I-1-P) but displaying a 20-fold higher rate of hydrolysis of D-I-1-P than of the L isomer, 2'-AMP, pNPP, inositol-2-phosphate, beta-glycerol phosphate, and alpha-D-glucose-1-phosphate. Cannot hydrolyze glucose-6-phosphate, fructose-6-phosphate, 5'-AMP and NAD(+). May be involved in the biosynthesis of a unique osmolyte, di-myo-inositol 1,1-phosphate. This Thermotoga maritima (strain ATCC 43589 / DSM 3109 / JCM 10099 / NBRC 100826 / MSB8) protein is Fructose-1,6-bisphosphatase/inositol-1-monophosphatase (suhB).